The sequence spans 297 residues: Homoserine kinase (297 aa).

82–92 (PLTRGLGSSAS) provides a ligand contact to ATP.

The protein belongs to the GHMP kinase family. Homoserine kinase subfamily.

The protein resides in the cytoplasm. It carries out the reaction L-homoserine + ATP = O-phospho-L-homoserine + ADP + H(+). The protein operates within amino-acid biosynthesis; L-threonine biosynthesis; L-threonine from L-aspartate: step 4/5. Functionally, catalyzes the ATP-dependent phosphorylation of L-homoserine to L-homoserine phosphate. This chain is Homoserine kinase, found in Bacillus mycoides (strain KBAB4) (Bacillus weihenstephanensis).